The following is a 235-amino-acid chain: Phosphoribosylaminoimidazole-succinocarboxamide synthase (235 aa).

The protein belongs to the SAICAR synthetase family.

It catalyses the reaction 5-amino-1-(5-phospho-D-ribosyl)imidazole-4-carboxylate + L-aspartate + ATP = (2S)-2-[5-amino-1-(5-phospho-beta-D-ribosyl)imidazole-4-carboxamido]succinate + ADP + phosphate + 2 H(+). Its pathway is purine metabolism; IMP biosynthesis via de novo pathway; 5-amino-1-(5-phospho-D-ribosyl)imidazole-4-carboxamide from 5-amino-1-(5-phospho-D-ribosyl)imidazole-4-carboxylate: step 1/2. The sequence is that of Phosphoribosylaminoimidazole-succinocarboxamide synthase from Clostridium kluyveri (strain NBRC 12016).